The chain runs to 128 residues: MTFASKSLLLAAVFTAVLSGGLWHRLDSTRHDNQTLRRELQTEQQARHTAEWLLHGQEQTMQVFSAIRAANRAARLADETEHHDAKEKITTAITGDNCSTRPVPAVAADRLRELEKRTRAIGGDPARN.

Residues 7–23 (SLLLAAVFTAVLSGGLW) traverse the membrane as a helical segment. A coiled-coil region spans residues 24–51 (HRLDSTRHDNQTLRRELQTEQQARHTAE).

In terms of assembly, interacts with the spanin outer membrane subunit. Part of the spanin complex which spans the entire periplasmic space. The spanin complex is composed of spanin inner membrane subunit and spanin outer membrane subunit.

It is found in the host cell inner membrane. Component of the spanin complex that disrupts the host outer membrane and causes cell lysis during virus exit. The spanin complex conducts the final step in host lysis by disrupting the outer membrane after endolysin action has degraded the host peptidoglycans. Host outer membrane disruption is possibly due to local fusion between the inner and outer membrane performed by the spanin complex. This chain is Spanin, inner membrane subunit, found in Escherichia phage Mu (Bacteriophage Mu).